We begin with the raw amino-acid sequence, 620 residues long: Chaperone protein HscA homolog (620 aa).

Belongs to the heat shock protein 70 family.

Its function is as follows. Chaperone involved in the maturation of iron-sulfur cluster-containing proteins. Has a low intrinsic ATPase activity which is markedly stimulated by HscB. This is Chaperone protein HscA homolog from Pseudomonas entomophila (strain L48).